An 88-amino-acid chain; its full sequence is Small ribosomal subunit protein uS15c (88 aa).

The protein belongs to the universal ribosomal protein uS15 family. As to quaternary structure, part of the 30S ribosomal subunit.

It is found in the plastid. The protein resides in the chloroplast. This chain is Small ribosomal subunit protein uS15c (rps15), found in Barbarea verna (Land cress).